We begin with the raw amino-acid sequence, 245 residues long: Bis(5'-nucleosyl)-tetraphosphatase PrpE [asymmetrical] (245 aa).

This sequence belongs to the PrpE family. It depends on Ni(2+) as a cofactor.

It carries out the reaction P(1),P(4)-bis(5'-guanosyl) tetraphosphate + H2O = GMP + GTP + 2 H(+). Asymmetrically hydrolyzes Ap4p to yield AMP and ATP. This Geobacillus thermodenitrificans (strain NG80-2) protein is Bis(5'-nucleosyl)-tetraphosphatase PrpE [asymmetrical].